The primary structure comprises 299 residues: UTP--glucose-1-phosphate uridylyltransferase (299 aa).

It belongs to the UDPGP type 2 family.

It carries out the reaction alpha-D-glucose 1-phosphate + UTP + H(+) = UDP-alpha-D-glucose + diphosphate. It participates in carbohydrate metabolism; nucleotide-sugar metabolism. Its pathway is capsule biogenesis; capsule polysaccharide biosynthesis. This Streptococcus pneumoniae serotype 4 (strain ATCC BAA-334 / TIGR4) protein is UTP--glucose-1-phosphate uridylyltransferase (cap4C).